Here is a 690-residue protein sequence, read N- to C-terminus: UvrABC system protein C (690 aa).

The GIY-YIG domain maps to 15–94 (TDPGVYTFRD…IKRFNPRFNV (80 aa)). In terms of domain architecture, UVR spans 207–242 (EPVLRRVRKEMEQASENLDFERAASLRDQLQAMQKS).

It belongs to the UvrC family. Interacts with UvrB in an incision complex.

The protein localises to the cytoplasm. The UvrABC repair system catalyzes the recognition and processing of DNA lesions. UvrC both incises the 5' and 3' sides of the lesion. The N-terminal half is responsible for the 3' incision and the C-terminal half is responsible for the 5' incision. This chain is UvrABC system protein C, found in Corynebacterium jeikeium (strain K411).